Reading from the N-terminus, the 302-residue chain is Catechol 1,2-dioxygenase (302 aa).

Residues Y164, Y198, H222, and H224 each coordinate Fe cation.

This sequence belongs to the intradiol ring-cleavage dioxygenase family. Requires Fe(3+) as cofactor.

The enzyme catalyses catechol + O2 = cis,cis-muconate + 2 H(+). It functions in the pathway aromatic compound metabolism; beta-ketoadipate pathway; 5-oxo-4,5-dihydro-2-furylacetate from catechol: step 1/3. In Pseudomonas sp. (strain EST1001), this protein is Catechol 1,2-dioxygenase (pheB).